The sequence spans 67 residues: Conotoxin TsMMSK-011 (67 aa).

The N-terminal stretch at 1–20 is a signal peptide; that stretch reads MMSKLGVLLTICLLLFPLTA. Residues 21-50 constitute a propeptide that is removed on maturation; sequence VQLDGDQPADLPALRTQDIATDHSPWFDPV. Cystine bridges form between cysteine 53–cysteine 65, cysteine 54–cysteine 61, and cysteine 58–cysteine 64. Proline 63 is subject to 4-hydroxyproline.

It belongs to the conotoxin M superfamily. As to expression, expressed by the venom duct.

The protein localises to the secreted. The sequence is that of Conotoxin TsMMSK-011 from Conus tessulatus (Tessellate cone).